A 330-amino-acid chain; its full sequence is Aspartate--ammonia ligase (330 aa).

The protein belongs to the class-II aminoacyl-tRNA synthetase family. AsnA subfamily.

The protein localises to the cytoplasm. The enzyme catalyses L-aspartate + NH4(+) + ATP = L-asparagine + AMP + diphosphate + H(+). It participates in amino-acid biosynthesis; L-asparagine biosynthesis; L-asparagine from L-aspartate (ammonia route): step 1/1. This Escherichia coli O139:H28 (strain E24377A / ETEC) protein is Aspartate--ammonia ligase.